The sequence spans 482 residues: tRNA sulfurtransferase (482 aa).

The region spanning Leu61–Arg165 is the THUMP domain. Residues Leu183 to Ile184, Lys265, Gly287, and Gln296 contribute to the ATP site. Cys344 and Cys456 are disulfide-bonded. Positions Phe404 to Pro482 constitute a Rhodanese domain. Cys456 acts as the Cysteine persulfide intermediate in catalysis.

Belongs to the ThiI family.

It is found in the cytoplasm. It carries out the reaction [ThiI sulfur-carrier protein]-S-sulfanyl-L-cysteine + a uridine in tRNA + 2 reduced [2Fe-2S]-[ferredoxin] + ATP + H(+) = [ThiI sulfur-carrier protein]-L-cysteine + a 4-thiouridine in tRNA + 2 oxidized [2Fe-2S]-[ferredoxin] + AMP + diphosphate. It catalyses the reaction [ThiS sulfur-carrier protein]-C-terminal Gly-Gly-AMP + S-sulfanyl-L-cysteinyl-[cysteine desulfurase] + AH2 = [ThiS sulfur-carrier protein]-C-terminal-Gly-aminoethanethioate + L-cysteinyl-[cysteine desulfurase] + A + AMP + 2 H(+). It functions in the pathway cofactor biosynthesis; thiamine diphosphate biosynthesis. Catalyzes the ATP-dependent transfer of a sulfur to tRNA to produce 4-thiouridine in position 8 of tRNAs, which functions as a near-UV photosensor. Also catalyzes the transfer of sulfur to the sulfur carrier protein ThiS, forming ThiS-thiocarboxylate. This is a step in the synthesis of thiazole, in the thiamine biosynthesis pathway. The sulfur is donated as persulfide by IscS. The chain is tRNA sulfurtransferase from Escherichia fergusonii (strain ATCC 35469 / DSM 13698 / CCUG 18766 / IAM 14443 / JCM 21226 / LMG 7866 / NBRC 102419 / NCTC 12128 / CDC 0568-73).